Reading from the N-terminus, the 432-residue chain is DEAD-box ATP-dependent RNA helicase 56 (432 aa).

The stretch at 1–28 (MAEAEVKDNEVYEEDLVDYEEEVENGTD) forms a coiled coil. Positions 51-79 (SGFRDFLLKPELLRAIQDCGFEHPSEVQH) match the Q motif motif. Positions 82–255 (IPQAILGMDV…KKFMQDPMEI (174 aa)) constitute a Helicase ATP-binding domain. 95–102 (AKSGMGKT) lines the ATP pocket. A DEAD box motif is present at residues 202–205 (DECD). In terms of domain architecture, Helicase C-terminal spans 283 to 428 (KLNDLLDALD…ELPEQIDTST (146 aa)).

It belongs to the DEAD box helicase family. DECD subfamily. Homodimer and heterodimer with AIP2. Interacts with API5.

The protein resides in the nucleus. It carries out the reaction ATP + H2O = ADP + phosphate + H(+). In terms of biological role, ATP-binding RNA helicase involved in pre-mRNA splicing. Required for the export of mRNA out of the nucleus. Required for tapetal programmed cell death (PCD) and degeneration during anther development. Forms dimer with AIP2 and binds the promoter region of the cysteine protease CP1. Can complement the yeast RNA helicase SUB2. Plants silencing AIP1 and AIP2 are male sterile. In Oryza sativa subsp. japonica (Rice), this protein is DEAD-box ATP-dependent RNA helicase 56.